A 382-amino-acid chain; its full sequence is Carbamoyl phosphate synthase small chain (382 aa).

Residues 1–189 (MIKSALLVLE…GLPEAKKEDE (189 aa)) form a CPSase region. The L-glutamine site is built by Ser-47, Gly-241, and Gly-243. One can recognise a Glutamine amidotransferase type-1 domain in the interval 193-380 (HVVAYDFGAK…IELIEQYRKT (188 aa)). The Nucleophile role is filled by Cys-269. Positions 270, 273, 311, 313, and 314 each coordinate L-glutamine. Residues His-353 and Glu-355 contribute to the active site.

This sequence belongs to the CarA family. As to quaternary structure, composed of two chains; the small (or glutamine) chain promotes the hydrolysis of glutamine to ammonia, which is used by the large (or ammonia) chain to synthesize carbamoyl phosphate. Tetramer of heterodimers (alpha,beta)4.

The catalysed reaction is hydrogencarbonate + L-glutamine + 2 ATP + H2O = carbamoyl phosphate + L-glutamate + 2 ADP + phosphate + 2 H(+). The enzyme catalyses L-glutamine + H2O = L-glutamate + NH4(+). The protein operates within amino-acid biosynthesis; L-arginine biosynthesis; carbamoyl phosphate from bicarbonate: step 1/1. It functions in the pathway pyrimidine metabolism; UMP biosynthesis via de novo pathway; (S)-dihydroorotate from bicarbonate: step 1/3. Functionally, small subunit of the glutamine-dependent carbamoyl phosphate synthetase (CPSase). CPSase catalyzes the formation of carbamoyl phosphate from the ammonia moiety of glutamine, carbonate, and phosphate donated by ATP, constituting the first step of 2 biosynthetic pathways, one leading to arginine and/or urea and the other to pyrimidine nucleotides. The small subunit (glutamine amidotransferase) binds and cleaves glutamine to supply the large subunit with the substrate ammonia. This Escherichia coli O157:H7 protein is Carbamoyl phosphate synthase small chain.